Reading from the N-terminus, the 964-residue chain is Probable outer membrane protein PmpE (964 aa).

The signal sequence occupies residues 1-18; the sequence is MKKAFFFFLIGNSLSGLA. Residues 683–964 form the Autotransporter domain; sequence LTPSGHPFWG…YLNGEIALRF (282 aa).

It belongs to the PMP outer membrane protein family.

It localises to the secreted. The protein localises to the cell wall. Its subcellular location is the cell outer membrane. The sequence is that of Probable outer membrane protein PmpE (pmpE) from Chlamydia trachomatis serovar D (strain ATCC VR-885 / DSM 19411 / UW-3/Cx).